A 239-amino-acid chain; its full sequence is Ribonuclease PH (239 aa).

Phosphate contacts are provided by residues Arg-86 and 124-126 (GTR).

Belongs to the RNase PH family. In terms of assembly, homohexameric ring arranged as a trimer of dimers.

It carries out the reaction tRNA(n+1) + phosphate = tRNA(n) + a ribonucleoside 5'-diphosphate. Its function is as follows. Phosphorolytic 3'-5' exoribonuclease that plays an important role in tRNA 3'-end maturation. Removes nucleotide residues following the 3'-CCA terminus of tRNAs; can also add nucleotides to the ends of RNA molecules by using nucleoside diphosphates as substrates, but this may not be physiologically important. Probably plays a role in initiation of 16S rRNA degradation (leading to ribosome degradation) during starvation. This is Ribonuclease PH from Cupriavidus taiwanensis (strain DSM 17343 / BCRC 17206 / CCUG 44338 / CIP 107171 / LMG 19424 / R1) (Ralstonia taiwanensis (strain LMG 19424)).